A 319-amino-acid chain; its full sequence is Ankyrin repeat domain-containing protein 1 (319 aa).

Positions 63 to 89 (EKQLEAELKKKKLEQRSKLENLEDLEI) form a coiled coil. ANK repeat units lie at residues 152-181 (YKRT…QIEF), 185-214 (LEST…KISA), 218-247 (LLST…DLNA), 251-280 (EGDT…DLTI), and 284-315 (AGKT…KTSR).

In terms of assembly, interacts with TTN/titin and YBX1.

It is found in the nucleus. In terms of biological role, may play an important role in endothelial cell activation. May act as a nuclear transcription factor that negatively regulates the expression of cardiac genes. This Oryctolagus cuniculus (Rabbit) protein is Ankyrin repeat domain-containing protein 1 (ANKRD1).